A 115-amino-acid polypeptide reads, in one-letter code: Putative HNH nuclease YajD (115 aa).

Residues 27–75 (CGRCSREFVYSNLRELTVHHIDHDHTNNPEDGSNWELLCLYCHDHEHSK) form the HNH domain.

Belongs to the HNH nuclease family.

The chain is Putative HNH nuclease YajD (yajD) from Salmonella typhi.